The primary structure comprises 180 residues: Type-1 fimbrial protein, C chain (180 aa).

Positions 1 to 23 (MKLKFISMAVFSALTLGVATNAS) are cleaved as a signal peptide. A disulfide bridge connects residues Cys44 and Cys84.

It belongs to the fimbrial protein family.

Its subcellular location is the fimbrium. In terms of biological role, fimbriae (also called pili), polar filaments radiating from the surface of the bacterium to a length of 0.5-1.5 micrometers and numbering 100-300 per cell, enable bacteria to colonize the epithelium of specific host organs. The sequence is that of Type-1 fimbrial protein, C chain (pilC) from Escherichia coli O6:H1 (strain CFT073 / ATCC 700928 / UPEC).